The following is a 288-amino-acid chain: Polyamine aminopropyltransferase (288 aa).

One can recognise a PABS domain in the interval 9–238 (ETLHDQFGQY…GIMTFAWATD (230 aa)). Residue glutamine 33 coordinates S-methyl-5'-thioadenosine. Residues histidine 64 and aspartate 88 each coordinate spermidine. S-methyl-5'-thioadenosine-binding positions include glutamate 108 and 140-141 (DG). Aspartate 158 serves as the catalytic Proton acceptor. 158-161 (DCTD) lines the spermidine pocket. Proline 165 contacts S-methyl-5'-thioadenosine.

This sequence belongs to the spermidine/spermine synthase family. As to quaternary structure, homodimer or homotetramer.

Its subcellular location is the cytoplasm. The catalysed reaction is S-adenosyl 3-(methylsulfanyl)propylamine + putrescine = S-methyl-5'-thioadenosine + spermidine + H(+). Its pathway is amine and polyamine biosynthesis; spermidine biosynthesis; spermidine from putrescine: step 1/1. Catalyzes the irreversible transfer of a propylamine group from the amino donor S-adenosylmethioninamine (decarboxy-AdoMet) to putrescine (1,4-diaminobutane) to yield spermidine. In Shigella boydii serotype 18 (strain CDC 3083-94 / BS512), this protein is Polyamine aminopropyltransferase.